The following is a 311-amino-acid chain: tRNA N6-adenosine threonylcarbamoyltransferase (311 aa).

Fe cation-binding residues include His-108 and His-112. Substrate-binding positions include 130–134 (LVSGG), Asp-163, Gly-176, Asp-180, and Asn-270. Asp-294 is a Fe cation binding site.

This sequence belongs to the KAE1 / TsaD family. Requires Fe(2+) as cofactor.

Its subcellular location is the cytoplasm. The catalysed reaction is L-threonylcarbamoyladenylate + adenosine(37) in tRNA = N(6)-L-threonylcarbamoyladenosine(37) in tRNA + AMP + H(+). In terms of biological role, required for the formation of a threonylcarbamoyl group on adenosine at position 37 (t(6)A37) in tRNAs that read codons beginning with adenine. Is involved in the transfer of the threonylcarbamoyl moiety of threonylcarbamoyl-AMP (TC-AMP) to the N6 group of A37, together with TsaE and TsaB. TsaD likely plays a direct catalytic role in this reaction. In Metamycoplasma arthritidis (strain 158L3-1) (Mycoplasma arthritidis), this protein is tRNA N6-adenosine threonylcarbamoyltransferase.